We begin with the raw amino-acid sequence, 81 residues long: uncharacterized protein (81 aa).

This is an uncharacterized protein from Escherichia coli (strain K12).